The following is a 142-amino-acid chain: Small ribosomal subunit protein uS12 (142 aa).

Residues 1-44 (MANGKYAARKLKKDRQKHRWSDTDYARRERGLGKKSDPLEGAPQ) are disordered. Positions 7-18 (AARKLKKDRQKH) are enriched in basic residues. Basic and acidic residues predominate over residues 19–38 (RWSDTDYARRERGLGKKSDP).

It belongs to the universal ribosomal protein uS12 family. In terms of assembly, part of the 30S ribosomal subunit.

In terms of biological role, with S4 and S5 plays an important role in translational accuracy. Located at the interface of the 30S and 50S subunits. This is Small ribosomal subunit protein uS12 from Haloarcula marismortui (strain ATCC 43049 / DSM 3752 / JCM 8966 / VKM B-1809) (Halobacterium marismortui).